Consider the following 204-residue polypeptide: Cytochrome c biogenesis ATP-binding export protein CcmA (204 aa).

The region spanning 2-203 (LEADNLECVR…PAGTVRELRL (202 aa)) is the ABC transporter domain. 34–41 (GRNGAGKT) serves as a coordination point for ATP.

Belongs to the ABC transporter superfamily. CcmA exporter (TC 3.A.1.107) family. In terms of assembly, the complex is composed of two ATP-binding proteins (CcmA) and two transmembrane proteins (CcmB).

The protein resides in the cell inner membrane. The enzyme catalyses heme b(in) + ATP + H2O = heme b(out) + ADP + phosphate + H(+). Functionally, part of the ABC transporter complex CcmAB involved in the biogenesis of c-type cytochromes; once thought to export heme, this seems not to be the case, but its exact role is uncertain. Responsible for energy coupling to the transport system. The sequence is that of Cytochrome c biogenesis ATP-binding export protein CcmA from Dechloromonas aromatica (strain RCB).